Here is a 279-residue protein sequence, read N- to C-terminus: DegV domain-containing protein CPE1310 (279 aa).

A DegV domain is found at 4-277 (IKIITDSTCD…PKVCALFYVE (274 aa)). Residues T62 and S94 each coordinate hexadecanoate.

Its function is as follows. May bind long-chain fatty acids, such as palmitate, and may play a role in lipid transport or fatty acid metabolism. The chain is DegV domain-containing protein CPE1310 from Clostridium perfringens (strain 13 / Type A).